A 161-amino-acid polypeptide reads, in one-letter code: Transcriptional regulator MraZ (161 aa).

2 consecutive SpoVT-AbrB domains span residues 7-69 (KELH…EPDV) and 98-141 (LDVV…EPER).

Belongs to the MraZ family. Forms oligomers.

The protein resides in the cytoplasm. The protein localises to the nucleoid. The chain is Transcriptional regulator MraZ from Chlorobium limicola (strain DSM 245 / NBRC 103803 / 6330).